Here is a 349-residue protein sequence, read N- to C-terminus: N-acetyltaurine hydrolase (349 aa).

Positions 26, 28, 169, 201, 230, and 298 each coordinate a divalent metal cation.

This sequence belongs to the metallo-dependent hydrolases superfamily. Phosphotriesterase family. It depends on a divalent metal cation as a cofactor.

It localises to the cytoplasm. The protein resides in the cytosol. The enzyme catalyses N-acetyltaurine + H2O = taurine + acetate. The catalysed reaction is N-propanoyltaurine + H2O = propanoate + taurine. It catalyses the reaction N-acetyl-L-methionine + H2O = L-methionine + acetate. It carries out the reaction N-acetyl-L-isoleucine + H2O = L-isoleucine + acetate. The enzyme catalyses N-acetyl-L-leucine + H2O = L-leucine + acetate. The catalysed reaction is N-acetyl-L-valine + H2O = L-valine + acetate. Its function is as follows. N-acetyltaurine hydrolase that regulates feeding by catalyzing the hydrolysis of N-acetyltaurine into taurine and acetate. N-acetyltaurine has anorexigenic and anti-obesity effects that are dependent on GFRAL receptor and GDF15. PTER also acts on other N-acetyl amino acids (Met, Ile, Leu, Val) and N-propionyltaurine, but at lower rates. In Pongo abelii (Sumatran orangutan), this protein is N-acetyltaurine hydrolase.